Here is a 206-residue protein sequence, read N- to C-terminus: Enterobactin synthase component D (206 aa).

The Mg(2+) site is built by aspartate 107, glutamate 109, and glutamate 152.

It belongs to the P-Pant transferase superfamily. EntD family. As to quaternary structure, entB, EntD, EntE, and EntF form a multienzyme complex called enterobactin synthase. The cofactor is Mg(2+).

It localises to the membrane. It catalyses the reaction apo-[aryl-carrier protein] + CoA = holo-[aryl-carrier protein] + adenosine 3',5'-bisphosphate + H(+). The enzyme catalyses apo-[peptidyl-carrier protein] + CoA = holo-[peptidyl-carrier protein] + adenosine 3',5'-bisphosphate + H(+). It functions in the pathway siderophore biosynthesis; enterobactin biosynthesis. Functionally, involved in the biosynthesis of the siderophore enterobactin (enterochelin), which is a macrocyclic trimeric lactone of N-(2,3-dihydroxybenzoyl)-serine. The serine trilactone serves as a scaffolding for the three catechol functionalities that provide hexadentate coordination for the tightly ligated iron(2+) atoms. Plays an essential role in the assembly of the enterobactin by catalyzing the transfer of the 4'-phosphopantetheine (Ppant) moiety from coenzyme A to the apo-domains of both EntB (ArCP domain) and EntF (PCP domain) to yield their holo-forms which make them competent for the activation of 2,3-dihydroxybenzoate (DHB) and L-serine, respectively. This is Enterobactin synthase component D from Escherichia coli O157:H7.